The chain runs to 91 residues: Signal recognition particle 19 kDa protein (91 aa).

Belongs to the SRP19 family. Part of the signal recognition particle protein translocation system, which is composed of SRP and FtsY. Archaeal SRP consists of a 7S RNA molecule of 300 nucleotides and two protein subunits: SRP54 and SRP19.

It localises to the cytoplasm. Involved in targeting and insertion of nascent membrane proteins into the cytoplasmic membrane. Binds directly to 7S RNA and mediates binding of the 54 kDa subunit of the SRP. The polypeptide is Signal recognition particle 19 kDa protein (Methanothermobacter thermautotrophicus (strain ATCC 29096 / DSM 1053 / JCM 10044 / NBRC 100330 / Delta H) (Methanobacterium thermoautotrophicum)).